The chain runs to 21 residues: Peptide PGLa-R5 (21 aa).

The residue at position 21 (leucine 21) is a Leucine amide.

Expressed by the skin glands.

It is found in the secreted. In terms of biological role, antimicrobial peptide. This is Peptide PGLa-R5 from Xenopus ruwenzoriensis (Uganda clawed frog).